The chain runs to 220 residues: MAKILAVDDEKDILVLIQNILRRDQHQVDILDHVHGQPPDVFQGYDLILLDVMMPDIDGFELCKQIRPLVDCPILFLTAKTEEEAIVKGLITGGDDYITKPFGVRELSARVNAHLRRERRDKHQSKRVISGFLFHFDSKEVFINNNKLNLTKNEYKICEFLAQHKGRTFSREQIYEEIYGLEGNALYSTITEFIRTIRKKCKEHNADPIKTVWGVGYKWE.

The Response regulatory domain maps to 3–115 (KILAVDDEKD…ELSARVNAHL (113 aa)). Aspartate 51 carries the post-translational modification 4-aspartylphosphate. Residues 124–220 (QSKRVISGFL…TVWGVGYKWE (97 aa)) constitute a DNA-binding region (ompR/PhoB-type).

Post-translationally, phosphorylated by SpaK.

The protein localises to the cytoplasm. In terms of biological role, member of the two-component regulatory system SpaK/SpaR involved in the regulation of the biosynthesis of lantibiotic subtilin. SpaR may function as a regulatory protein. The chain is Transcriptional regulatory protein SpaR (spaR) from Bacillus subtilis.